Here is an 891-residue protein sequence, read N- to C-terminus: MAKPVVETPLMRQYFQIKQKHPDAILLFRVGDFYETFSEDAIVASEILGITLTRRANGAAQFVELAGFPHHALDTYLPKLVRAGKRVAICDQLEDPKKTKTLVKRGITELVTPGVSTNDNVLSHKENNFLAAVSCGKEVFGISLLDISTGEFMAGQGNADYVEKLLTNYRPKEILVERSERSRFNDLFHWSGFIFDMEDWAFSSENNRLRVLKHFDLKSLKGFGLEELSMAVTAAGAVLNYLDLTQHHQLQHITSLSRLDENRYVRLDKFTVRSLELLSPMNEGGKSLLDIIDHTITPMGARRIRQWIVFPLKDPARIQARQRVVEFFFRHPEERAIIAEHLTEIGDLERLVTKGAMGRISPREMVQLRVALQALEPIKEVCTHADEENLRTLGGKLELCKELRDKILREVMPDAPAALGRGPVIAHGVDATLDELRALAYSGKDYLIKLQQQEIERTGIPSLKVAYNNVFGYYIEVRNTHKDKVPAEWIRKQTLVSAERYITEELKEYEAKILGAEEKIAALEGQLYALLVAELQRYVAPLQQDSQAVASLDCLLSFAESARRYRFICPVVDESFTIDIKAGRHPVIEQQLPADEPYIANDIYLDTDRQQVIIVTGPNMSGKSALLRQTALISLMAQIGSFVPAESARIGMVDSIFTRVGASDNISMGESTFMVEMQEASNILNNLTPRSLVLFDELGRGTSTYDGISIAWSIVEYIHDNPKAHPRTLFATHYHELNELEGQLDRVHNFNVSAREVDGKMLFLRKLEPGGSAHSFGIQVARLGGMPHHIVQRATDILHRLEQEREKIEEEEPKTKDTKRGPSEKVKNASPTLPRDEKGRSIDGYQLSFFQLDDPVLSQIREEILDLNIDNLTPLEALNKLNDIKRILRGY.

617-624 (GPNMSGKS) contributes to the ATP binding site. The span at 805-827 (REKIEEEEPKTKDTKRGPSEKVK) shows a compositional bias: basic and acidic residues. The segment at 805–840 (REKIEEEEPKTKDTKRGPSEKVKNASPTLPRDEKGR) is disordered.

This sequence belongs to the DNA mismatch repair MutS family.

Its function is as follows. This protein is involved in the repair of mismatches in DNA. It is possible that it carries out the mismatch recognition step. This protein has a weak ATPase activity. The sequence is that of DNA mismatch repair protein MutS from Porphyromonas gingivalis (strain ATCC BAA-308 / W83).